The primary structure comprises 406 residues: Probable delta-aminolevulinic acid dehydratase 2, chloroplastic (406 aa).

Residues 1–34 constitute a chloroplast transit peptide; sequence MTSSMFRSPCKIPSVKGFEQKSYVGLKAASYNVR. The active-site Schiff-base intermediate with substrate is the Lys275. Residues Arg285 and Lys291 each coordinate 5-aminolevulinate. Glu307 provides a ligand contact to Mg(2+). The Schiff-base intermediate with substrate role is filled by Lys322. Positions 348 and 387 each coordinate 5-aminolevulinate.

Belongs to the ALAD family. As to quaternary structure, homooctamer. Mg(2+) is required as a cofactor.

The protein resides in the plastid. Its subcellular location is the chloroplast. The catalysed reaction is 2 5-aminolevulinate = porphobilinogen + 2 H2O + H(+). Its pathway is porphyrin-containing compound metabolism; protoporphyrin-IX biosynthesis; coproporphyrinogen-III from 5-aminolevulinate: step 1/4. It functions in the pathway porphyrin-containing compound metabolism; chlorophyll biosynthesis. Functionally, catalyzes an early step in the biosynthesis of tetrapyrroles. Binds two molecules of 5-aminolevulinate per subunit, each at a distinct site, and catalyzes their condensation to form porphobilinogen. The polypeptide is Probable delta-aminolevulinic acid dehydratase 2, chloroplastic (HEMB2) (Arabidopsis thaliana (Mouse-ear cress)).